Here is a 348-residue protein sequence, read N- to C-terminus: Protein RecA (348 aa).

68 to 75 (GPESSGKT) is a binding site for ATP.

The protein belongs to the RecA family.

The protein resides in the cytoplasm. Can catalyze the hydrolysis of ATP in the presence of single-stranded DNA, the ATP-dependent uptake of single-stranded DNA by duplex DNA, and the ATP-dependent hybridization of homologous single-stranded DNAs. It interacts with LexA causing its activation and leading to its autocatalytic cleavage. The chain is Protein RecA from Rhodococcus opacus (strain B4).